The primary structure comprises 306 residues: D-alanine--D-alanine ligase (306 aa).

Active-site residues include Glu-18 and Ser-150. The ATP-grasp domain maps to Lys-104–Glu-303. Val-134–Thr-189 contacts ATP. The Mg(2+) site is built by Asp-257, Glu-270, and Asn-272. Ser-281 is an active-site residue.

This sequence belongs to the D-alanine--D-alanine ligase family. It depends on Mg(2+) as a cofactor. Mn(2+) serves as cofactor.

It localises to the cytoplasm. It catalyses the reaction 2 D-alanine + ATP = D-alanyl-D-alanine + ADP + phosphate + H(+). It functions in the pathway cell wall biogenesis; peptidoglycan biosynthesis. Cell wall formation. In Haemophilus influenzae (strain ATCC 51907 / DSM 11121 / KW20 / Rd), this protein is D-alanine--D-alanine ligase.